The following is a 303-amino-acid chain: Type II methyltransferase M.MjaI (303 aa).

Belongs to the N(4)/N(6)-methyltransferase family. N(4) subfamily.

It carries out the reaction a 2'-deoxycytidine in DNA + S-adenosyl-L-methionine = an N(4)-methyl-2'-deoxycytidine in DNA + S-adenosyl-L-homocysteine + H(+). Its function is as follows. A beta subtype methylase that recognizes the double-stranded sequence 5'-CTAG-3', methylates C-1 on both strands, and protects the DNA from cleavage by the MjaI endonuclease. The polypeptide is Type II methyltransferase M.MjaI (mjaIM) (Methanocaldococcus jannaschii (strain ATCC 43067 / DSM 2661 / JAL-1 / JCM 10045 / NBRC 100440) (Methanococcus jannaschii)).